The chain runs to 54 residues: Large ribosomal subunit protein eL37 (54 aa).

Positions 20, 23, 35, and 38 each coordinate Zn(2+). The C4-type zinc-finger motif lies at 20–38 (CRRCGHHTYNVRTKRCSHC).

This sequence belongs to the eukaryotic ribosomal protein eL37 family. Zn(2+) is required as a cofactor.

In terms of biological role, binds to the 23S rRNA. This Thermoplasma acidophilum (strain ATCC 25905 / DSM 1728 / JCM 9062 / NBRC 15155 / AMRC-C165) protein is Large ribosomal subunit protein eL37 (rpl37e).